A 706-amino-acid polypeptide reads, in one-letter code: Complement C1r-B subcomponent (706 aa).

The N-terminal stretch at 1-16 is a signal peptide; it reads MWLFALLVTLFYGVEG. Residues 17 to 140 enclose the CUB 1 domain; the sequence is SIYLPQKLYG…KGFLAYYQAV (124 aa). Residues E65, D73, and D118 each coordinate Ca(2+). A disulfide bridge connects residues C70 and C88. The N-linked (GlcNAc...) asparagine glycan is linked to N124. Ca(2+)-binding residues include D141, L142, and E144. An EGF-like; calcium-binding domain is found at 141-189; the sequence is DLDECASQPNSVEEGLQPRCQHLCHNYVGGYFCSCHPGYELQKDGQSCQ. Disulfide bonds link C145-C164, C160-C173, C175-C188, and C192-C219. 3 residues coordinate Ca(2+): N166, Y167, and G170. N166 is modified ((3R)-3-hydroxyasparagine). The CUB 2 domain occupies 192-304; the sequence is CSSELYTEPS…RGWKLHYTTE (113 aa). S205 carries the post-translational modification Phosphoserine; by CK2. An N-linked (GlcNAc...) asparagine glycan is attached at N220. Positions 242, 252, 289, and 293 each coordinate Ca(2+). C249 and C267 are joined by a disulfide. 2 Sushi domains span residues 306-372 and 373-448; these read IKCP…RCKI and KNCG…RCLP. 5 cysteine pairs are disulfide-bonded: C308-C357, C337-C370, C375-C428, C405-C446, and C450-C578. The Peptidase S1 domain occupies 463 to 703; the sequence is IIGGQPARPG…YVDWIKKEMG (241 aa). Residues H501 and D558 each act as charge relay system in the active site. The N-linked (GlcNAc...) asparagine glycan is linked to N582. 2 disulfides stabilise this stretch: C621-C640 and C651-C681. The Charge relay system role is filled by S655.

It belongs to the peptidase S1 family. As to quaternary structure, core component of the complement C1 complex, a calcium-dependent complex composed of 1 molecule of the C1Q subcomplex, 2 molecules of C1R and 2 molecules of C1S. The C1Q subcomplex is composed 18 subunits: 3 chains of C1QA, C1QB, and C1QC trimerize to form 6 collagen-like triple helices connected to six globular ligand-recognition modules. Within the C1 complex, C1R is a dimer of identical chains, each of which is activated by cleavage into two chains, heavy and light, connected by disulfide bonds. Cleaved and activated by autocatalytic processing to generate Complement C1r subcomponent heavy and light chains that are connected by disulfide bonds. In terms of processing, the iron and 2-oxoglutarate dependent 3-hydroxylation of aspartate and asparagine is (R) stereospecific within EGF domains.

It localises to the secreted. The protein resides in the cell surface. The enzyme catalyses Selective cleavage of Lys(or Arg)-|-Ile bond in complement subcomponent C1s to form the active form of C1s (EC 3.4.21.42).. With respect to regulation, activated by the C1Q subcomplex of the C1 complex following C1Q binding to immunoglobulins (IgG or IgM) complexed with antigens to form antigen-antibody complexes on the surface of pathogens. Immunoglobulin-binding promotes autoactivation of C1R, which results in the cleavage of the Arg-Ile bond in the catalytic domain. Serine protease component of the complement C1 complex, a multiprotein complex that initiates the classical pathway of the complement system, a cascade of proteins that leads to phagocytosis and breakdown of pathogens and signaling that strengthens the adaptive immune system. C1R catalyzes the first enzymatic step in the classical complement pathway: it is activated by the C1Q subcomplex of the C1 complex, which associates with IgG or IgM immunoglobulins complexed with antigens to form antigen-antibody complexes on the surface of pathogens. Immunoglobulin-binding promotes the autocatalytic cleavage and activation of C1R. Activated C1R then cleaves and activates C1S, the second protease of the classical complement pathway. It is unclear if C1R activates C1S within single, strained C1 complexes or between neighboring C1 complexes on surfaces. The polypeptide is Complement C1r-B subcomponent (C1rb) (Mus musculus (Mouse)).